A 295-amino-acid polypeptide reads, in one-letter code: Ribosomal RNA small subunit methyltransferase A (295 aa).

6 residues coordinate S-adenosyl-L-methionine: Asn31, Leu33, Gly58, Glu79, Asp104, and Asn129.

It belongs to the class I-like SAM-binding methyltransferase superfamily. rRNA adenine N(6)-methyltransferase family. RsmA subfamily.

Its subcellular location is the cytoplasm. It catalyses the reaction adenosine(1518)/adenosine(1519) in 16S rRNA + 4 S-adenosyl-L-methionine = N(6)-dimethyladenosine(1518)/N(6)-dimethyladenosine(1519) in 16S rRNA + 4 S-adenosyl-L-homocysteine + 4 H(+). Specifically dimethylates two adjacent adenosines (A1518 and A1519) in the loop of a conserved hairpin near the 3'-end of 16S rRNA in the 30S particle. May play a critical role in biogenesis of 30S subunits. This is Ribosomal RNA small subunit methyltransferase A from Leuconostoc citreum (strain KM20).